The chain runs to 33 residues: Brevinin-2Ef (33 aa).

C27 and C33 are oxidised to a cystine.

As to expression, expressed by the skin glands.

It is found in the secreted. Its function is as follows. Shows antibacterial activity against representative Gram-negative and Gram-positive bacterial species, and hemolytic activity. This is Brevinin-2Ef from Pelophylax ridibundus (Marsh frog).